We begin with the raw amino-acid sequence, 265 residues long: Hydroxyethylthiazole kinase 2 (265 aa).

Methionine 39 is a binding site for substrate. Positions 115 and 168 each coordinate ATP. Position 195 (glycine 195) interacts with substrate.

The protein belongs to the Thz kinase family. It depends on Mg(2+) as a cofactor.

The catalysed reaction is 5-(2-hydroxyethyl)-4-methylthiazole + ATP = 4-methyl-5-(2-phosphooxyethyl)-thiazole + ADP + H(+). It participates in cofactor biosynthesis; thiamine diphosphate biosynthesis; 4-methyl-5-(2-phosphoethyl)-thiazole from 5-(2-hydroxyethyl)-4-methylthiazole: step 1/1. Catalyzes the phosphorylation of the hydroxyl group of 4-methyl-5-beta-hydroxyethylthiazole (THZ). The protein is Hydroxyethylthiazole kinase 2 of Clostridium botulinum (strain ATCC 19397 / Type A).